The following is an 820-amino-acid chain: Phospholipase D alpha 3 (820 aa).

The C2 domain occupies 1–133 (MTEQLLLHGT…ITGQPIDRWL (133 aa)). Aspartate 194 provides a ligand contact to Ca(2+). Residues 334–371 (TMFTHHQKTIVVDSEVDGSLTKRRIVSFLGGIDLCDGR) form the PLD phosphodiesterase 1 domain. Residues histidine 339, lysine 341, and aspartate 346 contribute to the active site. Histidine 339 is an a 1,2-diacyl-sn-glycero-3-phosphate binding site. Positions 377 and 411 each coordinate Ca(2+). Residues glutamine 528 and histidine 667 each contribute to the a 1,2-diacyl-sn-glycero-3-phosphate site. The region spanning 662–689 (FMIYVHSKMMIVDDEYIIIGSANINQRS) is the PLD phosphodiesterase 2 domain. Residues histidine 667, lysine 669, and aspartate 674 contribute to the active site. A Ca(2+)-binding site is contributed by glutamate 730.

Belongs to the phospholipase D family. C2-PLD subfamily. Requires Ca(2+) as cofactor. Expressed in buds, flowers, siliques, stems, old leaves and roots. Expressed in the sieve elements.

The protein resides in the cytoplasm. It is found in the membrane. It carries out the reaction a 1,2-diacyl-sn-glycero-3-phosphocholine + H2O = a 1,2-diacyl-sn-glycero-3-phosphate + choline + H(+). In terms of biological role, hydrolyzes glycerol-phospholipids at the terminal phosphodiesteric bond to generate phosphatidic acids (PA). Active with phosphatidylcholine (PC), phosphatidylethanolamine (PE), phosphatidylglycerol (PG), and phosphatidylserine (PS) as substrates. No activity toward phosphatidylinositol (PI) or PIP2. Positively mediates plant responses to hyperosmotic stresses and promotes root growth, flowering, and stress avoidance. Not involved in the abscisic acid regulation of stomatal movement and transpirational water loss. This chain is Phospholipase D alpha 3, found in Arabidopsis thaliana (Mouse-ear cress).